The primary structure comprises 2559 residues: Stabilin-2 (2559 aa).

The first 28 residues, 1-28, serve as a signal peptide directing secretion; it reads MARSKLLLGKLLPLILIFLGLLVQNACS. The Extracellular segment spans residues 29 to 2464; sequence PTEAPELTKR…PPTAATAAHS (2436 aa). Asparagine 71 carries an N-linked (GlcNAc...) asparagine glycan. EGF-like domains are found at residues 116 to 156, 164 to 201, 203 to 244, 245 to 284, and 330 to 370; these read DCME…TACE, FGPN…PRCD, PIPE…QTCK, PINP…QVCL, and MTDI…LNCY. 3 disulfides stabilise this stretch: cysteine 120–cysteine 134, cysteine 128–cysteine 144, and cysteine 146–cysteine 155. The N-linked (GlcNAc...) asparagine glycan is linked to asparagine 167. 12 cysteine pairs are disulfide-bonded: cysteine 168–cysteine 179, cysteine 172–cysteine 189, cysteine 191–cysteine 200, cysteine 207–cysteine 218, cysteine 212–cysteine 230, cysteine 232–cysteine 243, cysteine 249–cysteine 260, cysteine 254–cysteine 270, cysteine 272–cysteine 283, cysteine 334–cysteine 346, cysteine 340–cysteine 356, and cysteine 358–cysteine 369. Asparagine 345 carries N-linked (GlcNAc...) asparagine glycosylation. FAS1 domains lie at 379–512 and 522–659; these read ELNT…DRAM and NPQQ…TGVL. 4 N-linked (GlcNAc...) asparagine glycosylation sites follow: asparagine 572, asparagine 626, asparagine 673, and asparagine 691. In terms of domain architecture, EGF-like 6 spans 743 to 783; it reads DCNPCPGGFMNPCSGNGQCIDGLGGNGTCICEDGFQGSRCQ. 3 cysteine pairs are disulfide-bonded: cysteine 747–cysteine 761, cysteine 755–cysteine 771, and cysteine 773–cysteine 782. A glycan (N-linked (GlcNAc...) asparagine) is linked at asparagine 768. N-linked (GlcNAc...) asparagine glycosylation occurs at asparagine 796. EGF-like domains lie at 833–873, 874–917, 918–960, and 961–1002; these read QTSA…TLCS, KKDP…RDCV, EINS…IDCE, and PIIS…VLCY. Cystine bridges form between cysteine 837-cysteine 850, cysteine 844-cysteine 859, cysteine 861-cysteine 872, cysteine 878-cysteine 893, cysteine 887-cysteine 903, cysteine 905-cysteine 916, cysteine 922-cysteine 936, cysteine 930-cysteine 946, cysteine 948-cysteine 959, cysteine 965-cysteine 978, cysteine 972-cysteine 988, and cysteine 990-cysteine 1001. A glycan (N-linked (GlcNAc...) asparagine) is linked at asparagine 854. Asparagine 933 carries N-linked (GlcNAc...) asparagine glycosylation. 2 consecutive FAS1 domains span residues 1002 to 1135 and 1145 to 1273; these read YGNV…NKVL and LPSL…EKVL. N-linked (GlcNAc...) asparagine glycans are attached at residues asparagine 1024, asparagine 1036, asparagine 1108, asparagine 1255, and asparagine 1283. A Laminin EGF-like 1 domain is found at 1350-1415; that stretch reads PQCQACPGKG…CSCVHGRCNQ (66 aa). Intrachain disulfides connect cysteine 1355-cysteine 1369, cysteine 1363-cysteine 1379, cysteine 1381-cysteine 1390, cysteine 1402-cysteine 1413, cysteine 1406-cysteine 1423, cysteine 1425-cysteine 1434, cysteine 1443-cysteine 1453, cysteine 1447-cysteine 1463, cysteine 1465-cysteine 1476, cysteine 1482-cysteine 1495, cysteine 1489-cysteine 1505, cysteine 1507-cysteine 1518, cysteine 1524-cysteine 1537, cysteine 1531-cysteine 1547, cysteine 1549-cysteine 1560, cysteine 1566-cysteine 1579, cysteine 1573-cysteine 1589, and cysteine 1591-cysteine 1602. Asparagine 1374 and asparagine 1386 each carry an N-linked (GlcNAc...) asparagine glycan. EGF-like domains follow at residues 1439–1477, 1478–1519, 1520–1561, and 1562–1603; these read TTDN…TVCT, AINA…IVCL, EINP…KVCT, and LINV…IVCR. Asparagine 1444 carries an N-linked (GlcNAc...) asparagine glycan. Asparagine 1472 carries an N-linked (GlcNAc...) asparagine glycan. Asparagine 1580 carries N-linked (GlcNAc...) asparagine glycosylation. FAS1 domains follow at residues 1603 to 1731 and 1747 to 1888; these read RGSI…DTLL and VLLN…DCLL. The N-linked (GlcNAc...) asparagine glycan is linked to asparagine 1750. One can recognise a Laminin EGF-like 2 domain in the interval 1965-2030; sequence PDCQACPGGP…GCSEHGQCDE (66 aa). Intrachain disulfides connect cysteine 1970-cysteine 1984, cysteine 1978-cysteine 1994, cysteine 1996-cysteine 2005, cysteine 2017-cysteine 2028, cysteine 2022-cysteine 2038, cysteine 2040-cysteine 2049, cysteine 2059-cysteine 2069, cysteine 2063-cysteine 2075, cysteine 2077-cysteine 2088, cysteine 2094-cysteine 2107, cysteine 2101-cysteine 2116, cysteine 2118-cysteine 2129, cysteine 2135-cysteine 2149, cysteine 2143-cysteine 2159, cysteine 2161-cysteine 2172, cysteine 2228-cysteine 2296, and cysteine 2252-cysteine 2273. N-linked (GlcNAc...) asparagine glycosylation is present at asparagine 2001. EGF-like domains lie at 2055–2089, 2090–2130, and 2131–2173; these read VIPV…ITCT, VVDF…HSCT, and EIDP…RDCE. Asparagine 2072 carries N-linked (GlcNAc...) asparagine glycosylation. A Link domain is found at 2206 to 2298; it reads GVFHLRSPLG…SEMWDVFCYR (93 aa). 5 N-linked (GlcNAc...) asparagine glycosylation sites follow: asparagine 2287, asparagine 2303, asparagine 2375, asparagine 2391, and asparagine 2400. One can recognise an FAS1 7 domain in the interval 2318-2452; sequence NGNLLQVLMS…GVLHIISEPL (135 aa). The chain crosses the membrane as a helical span at residues 2465–2485; sequence GLGTGIFCAVVLVTGAIALAA. The Cytoplasmic portion of the chain corresponds to 2486–2559; it reads YSYFRLNQRT…NSDPLGALRS (74 aa). Serine 2503 bears the Phosphoserine mark. Residues 2510–2520 form an interaction with TMSB4X region; it reads LAFGKQQPESI. The segment at 2514 to 2559 is disordered; the sequence is KQQPESITNPLYETSTPAAPEPSCDPFTDSGERELENSDPLGALRS. Residues 2516–2530 show a composition bias toward polar residues; that stretch reads QPESITNPLYETSTP.

As to quaternary structure, interacts with heparin, alpha-M/beta-2 integrin (ITGAM and ITGB2), and thymosin beta 4 (TMSB4X). Interacts with GULP1. Associates with clathrin and adapter protein AP-2; in liver sinusoidal endothelial cells (LSECs). Post-translationally, glycosylated. In terms of processing, proteolytically processed to yield a smaller protein. Expressed in endothelial sinuses of liver, lymph nodes, bone marrow, spleen and in specialised structures of eye, heart, brain and kidney. Expression is detected in corneal and lens epithelium, in mesenchymal cells of the heart valves, in the ependymal cells lining the ventricles in the brain, and in the prismatic epithelial cells covering the renal papillae.

Its subcellular location is the cytoplasm. It localises to the cell membrane. In terms of biological role, phosphatidylserine receptor that enhances the engulfment of apoptotic cells. Hyaluronan receptor that binds to and mediates endocytosis of hyaluronic acid (HA). Also acts, in different species, as a primary systemic scavenger receptor for heparin (Hep), chondroitin sulfate (CS), dermatan sulfate (DS), nonglycosaminoglycan (GAG), acetylated low-density lipoprotein (AcLDL), pro-collagen propeptides and advanced glycation end products (AGE). May serve to maintain tissue integrity by supporting extracellular matrix turnover or it may contribute to maintaining fluidity of bodily liquids by resorption of hyaluronan. Counter receptor which plays an important role in lymphocyte recruitment in the hepatic vasculature. Binds to both Gram-positive and Gram-negative bacteria and may play a role in defense against bacterial infection. The proteolytically processed short form also functions as an endocytosis receptor for heparin internalization as well as HA and CS. This Mus musculus (Mouse) protein is Stabilin-2.